Here is a 466-residue protein sequence, read N- to C-terminus: MAEAEGVPTTPGPASGSTFRGRRDVSGSWERDQQVEAAQRALVEVLGPYEPLLSRVQAALVWERPARSALWCLGLNAAFWFFALTSLRLVFLLAFGLMIIVCIDQWKNKIWPEIKVPRPDALDNESWGFVHPRLLSVPELCHHVAEVWVSGTIFIRNVLLFKKQNPGKFCLLSCGILTFLAVLGRYVPGLLLSYLMLVTVMMWPLAVYHRLWDRAYVRLKPALQRLDFSVRGYMMSKQRERQLRRRALHPERAMDNHSDSEEELAAFCPQLDDSTVARELAITDSEHSDAEVSCTDNGTFNLSRGQTPLTEGSEDLDGHSDPEESFARDLPDFPSINMDPAGLDDEDDTSIGMPSLMYRSPPGAEEPQAPPASRDEAALPELLLGALPVGSNLTSNLASLVSQGMIQLALSGASQPGPSGAPAQRATRGFLRSPSSDLDTDAEGDDFELLDQSELSQLDPASSRSH.

Residues 1-28 (MAEAEGVPTTPGPASGSTFRGRRDVSGS) are disordered. Ala2 is modified (N-acetylalanine). Topologically, residues 2-80 (AEAEGVPTTP…WCLGLNAAFW (79 aa)) are cytoplasmic. Thr10 is subject to Phosphothreonine. Ser26 carries the post-translational modification Phosphoserine. The helical transmembrane segment at 81-101 (FFALTSLRLVFLLAFGLMIIV) threads the bilayer. The Lumenal segment spans residues 102–163 (CIDQWKNKIW…FIRNVLLFKK (62 aa)). The helical transmembrane segment at 164–184 (QNPGKFCLLSCGILTFLAVLG) threads the bilayer. At 185-186 (RY) the chain is on the cytoplasmic side. A helical transmembrane segment spans residues 187-207 (VPGLLLSYLMLVTVMMWPLAV). The Lumenal portion of the chain corresponds to 208-381 (YHRLWDRAYV…ASRDEAALPE (174 aa)). 2 positions are modified to phosphoserine: Ser258 and Ser260. Thr283 is subject to Phosphothreonine. The segment at 284 to 374 (DSEHSDAEVS…EEPQAPPASR (91 aa)) is disordered. Residues Ser285, Ser288, Ser293, and Ser303 each carry the phosphoserine modification. A compositionally biased stretch (polar residues) spans 294–310 (CTDNGTFNLSRGQTPLT). A phosphothreonine mark is found at Thr307 and Thr310. A phosphoserine mark is found at Ser313, Ser320, and Ser360. Basic and acidic residues predominate over residues 316–331 (LDGHSDPEESFARDLP). The helical transmembrane segment at 382-402 (LLLGALPVGSNLTSNLASLVS) threads the bilayer. At 403-466 (QGMIQLALSG…QLDPASSRSH (64 aa)) the chain is on the cytoplasmic side. The tract at residues 412–466 (GASQPGPSGAPAQRATRGFLRSPSSDLDTDAEGDDFELLDQSELSQLDPASSRSH) is disordered. The segment covering 438 to 451 (LDTDAEGDDFELLD) has biased composition (acidic residues). Residue Thr440 is modified to Phosphothreonine. An LIR motif motif is present at residues 445-450 (DDFELL). Polar residues predominate over residues 453–466 (SELSQLDPASSRSH).

The protein belongs to the RETREG family. Interacts with ATG8 family modifier proteins MAP1LC3A, MAP1LC3B, MAP1LC3C, GABARAP, GABARAPL1 and GABARAPL2. Interacts with CANX. Interacts with RTN4 isoform B.

It is found in the endoplasmic reticulum membrane. Functionally, endoplasmic reticulum (ER)-anchored autophagy regulator which exists in an inactive state under basal conditions but is activated following cellular stress. When activated, induces ER fragmentation and mediates ER delivery into lysosomes through sequestration into autophagosomes via interaction with ATG8 family proteins. Promotes ER membrane curvature and ER tubulation required for subsequent ER fragmentation and engulfment into autophagosomes. Required for collagen quality control in a LIR motif-dependent manner. Mediates NRF1-enhanced neurite outgrowth. The sequence is that of Reticulophagy regulator 3 from Homo sapiens (Human).